Consider the following 217-residue polypeptide: Ras-related protein RABA1f (217 aa).

20-27 lines the GTP pocket; it reads GDSGVGKS. The Effector region signature appears at 42–50; it reads SKSTIGVEF. GTP is bound by residues 68–72, 126–129, and 156–157; these read DTAGQ, NKAD, and SA. Residues Cys-214 and Cys-215 are each lipidated (S-geranylgeranyl cysteine).

It belongs to the small GTPase superfamily. Rab family.

The protein localises to the cell membrane. Intracellular vesicle trafficking and protein transport. This Arabidopsis thaliana (Mouse-ear cress) protein is Ras-related protein RABA1f (RABA1F).